A 225-amino-acid polypeptide reads, in one-letter code: Uracil-DNA glycosylase (225 aa).

Asp65 (proton acceptor) is an active-site residue.

The protein belongs to the uracil-DNA glycosylase (UDG) superfamily. UNG family.

The protein resides in the cytoplasm. The enzyme catalyses Hydrolyzes single-stranded DNA or mismatched double-stranded DNA and polynucleotides, releasing free uracil.. Excises uracil residues from the DNA which can arise as a result of misincorporation of dUMP residues by DNA polymerase or due to deamination of cytosine. The sequence is that of Uracil-DNA glycosylase from Bacillus cereus (strain ATCC 10987 / NRS 248).